We begin with the raw amino-acid sequence, 387 residues long: 3-ketoacyl-CoA thiolase (387 aa).

The active-site Acyl-thioester intermediate is Cys91. Residues His343 and Cys373 each act as proton acceptor in the active site.

Belongs to the thiolase-like superfamily. Thiolase family. As to quaternary structure, heterotetramer of two alpha chains (FadB) and two beta chains (FadA).

Its subcellular location is the cytoplasm. The enzyme catalyses an acyl-CoA + acetyl-CoA = a 3-oxoacyl-CoA + CoA. It functions in the pathway lipid metabolism; fatty acid beta-oxidation. Catalyzes the final step of fatty acid oxidation in which acetyl-CoA is released and the CoA ester of a fatty acid two carbons shorter is formed. The protein is 3-ketoacyl-CoA thiolase of Escherichia coli O6:K15:H31 (strain 536 / UPEC).